A 177-amino-acid polypeptide reads, in one-letter code: uncharacterized protein (177 aa).

This is an uncharacterized protein from Treponema pallidum (strain Nichols).